A 241-amino-acid chain; its full sequence is Transcription initiation factor TFIID subunit 14 (241 aa).

Residues 1 to 137 (MTTVKRTVRL…PGLLKALTAT (137 aa)) enclose the YEATS domain. The tract at residues 141 to 169 (PGYSDEGEEARKDKRKNESEVGAGKKKAK) is disordered. Residues 149 to 159 (EARKDKRKNES) show a composition bias toward basic and acidic residues.

Belongs to the TAF14 family. In terms of assembly, component of the fcp1/TFIIF/polII complex via interaction of tfg3 with both tfg1/TFIIF-alpha and tfg2/TFIIF-beta subunits. Component of the SWI/SNF global transcription activator complex composed of at least arp9, arp42, snf5, snf22, snf30, sbf59, sol1, ssr1, ssr2, ssr3, ssr4 and tfg3. Also interacts with the TATA-binding protein (TBP). Component of the mst2 complex composed of at least eaf6, mst2, nto1, pdp3, ptf1, ptf2 and tfg3.

Its subcellular location is the nucleus. It localises to the nucleoplasm. Its function is as follows. Functions as a component of the DNA-binding general transcription factor complex TFIID, and the RNA polymerase II associated general transcription factor complex TFIIF. Binding of TFIID to a promoter (with or without TATA element) is the initial step in preinitiation complex (PIC) formation. TFIID plays a key role in the regulation of gene expression by RNA polymerase II through different activities such as transcription activator interaction, core promoter recognition and selectivity, TFIIA and TFIIB interaction, facilitation of DNA opening and initiation of transcription. TFIIF is essential for the initiation of transcription by RNA polymerase II. TFIIF functions include the recruitment of RNA polymerase II to the promoter bound DNA-TBP-TFIIB complex, decreasing the affinity of RNA polymerase II for non-specific DNA, allowing for the subsequent recruitment of TFIIE and TFIIH, and facilitating RNA polymerase II elongation. The TAF14 subunit has stimulatory activity. Component of the SWI/SNF complex, an ATP-dependent chromatin remodeling complex, required for the positive and negative regulation of gene expression of a large number of genes. It changes chromatin structure by altering DNA-histone contacts within a nucleosome, leading eventually to a change in nucleosome position, thus facilitating or repressing binding of gene-specific transcription factors. Component of the mst2 complex which is a highly specific H3 lysine 14 (H3K14) acetyltransferase that functions together with gcn5 to regulate global levels of H3K14 acetylation (H3K14ac), critical for DNA damage checkpoint activation. This chain is Transcription initiation factor TFIID subunit 14 (tfg3), found in Schizosaccharomyces pombe (strain 972 / ATCC 24843) (Fission yeast).